The chain runs to 98 residues: NADH-ubiquinone oxidoreductase chain 4L (98 aa).

The next 3 membrane-spanning stretches (helical) occupy residues 2–22 (PSIS…MLMF), 28–48 (SSLL…TLII), and 61–81 (IMLL…LVMV).

The protein belongs to the complex I subunit 4L family. As to quaternary structure, core subunit of respiratory chain NADH dehydrogenase (Complex I) which is composed of 45 different subunits.

The protein resides in the mitochondrion inner membrane. It carries out the reaction a ubiquinone + NADH + 5 H(+)(in) = a ubiquinol + NAD(+) + 4 H(+)(out). In terms of biological role, core subunit of the mitochondrial membrane respiratory chain NADH dehydrogenase (Complex I) which catalyzes electron transfer from NADH through the respiratory chain, using ubiquinone as an electron acceptor. Part of the enzyme membrane arm which is embedded in the lipid bilayer and involved in proton translocation. The chain is NADH-ubiquinone oxidoreductase chain 4L (MT-ND4L) from Allocebus trichotis (Hairy-eared dwarf lemur).